The chain runs to 381 residues: Phospholipid scramblase family protein C343.06c (381 aa).

The segment at 336 to 369 (QEILKNDQETTPSTNDSSSETKSPFLSDADLDQQ) is disordered. A compositionally biased stretch (polar residues) spans 344–359 (ETTPSTNDSSSETKSP).

Belongs to the phospholipid scramblase family.

Its subcellular location is the mitochondrion. In Schizosaccharomyces pombe (strain 972 / ATCC 24843) (Fission yeast), this protein is Phospholipid scramblase family protein C343.06c.